The following is a 424-amino-acid chain: UDP-N-acetylglucosamine 1-carboxyvinyltransferase (424 aa).

22–23 contributes to the phosphoenolpyruvate binding site; sequence KN. Residue arginine 93 participates in UDP-N-acetyl-alpha-D-glucosamine binding. The active-site Proton donor is the cysteine 117. Cysteine 117 bears the 2-(S-cysteinyl)pyruvic acid O-phosphothioketal mark. UDP-N-acetyl-alpha-D-glucosamine-binding positions include 122–126, aspartate 307, and isoleucine 329; that span reads RPVDL.

The protein belongs to the EPSP synthase family. MurA subfamily.

It localises to the cytoplasm. The catalysed reaction is phosphoenolpyruvate + UDP-N-acetyl-alpha-D-glucosamine = UDP-N-acetyl-3-O-(1-carboxyvinyl)-alpha-D-glucosamine + phosphate. It participates in cell wall biogenesis; peptidoglycan biosynthesis. Cell wall formation. Adds enolpyruvyl to UDP-N-acetylglucosamine. The polypeptide is UDP-N-acetylglucosamine 1-carboxyvinyltransferase (Chlorobaculum parvum (strain DSM 263 / NCIMB 8327) (Chlorobium vibrioforme subsp. thiosulfatophilum)).